The primary structure comprises 1496 residues: Rap guanine nucleotide exchange factor 2 (1496 aa).

2 disordered regions span residues His40 to Leu59 and Ser68 to Leu101. Positions Val83–Ile94 are enriched in acidic residues. Ala135–Val254 lines the a nucleoside 3',5'-cyclic phosphate pocket. One can recognise an N-terminal Ras-GEF domain in the interval Lys267 to Lys380. The PDZ domain maps to Leu385–Phe470. Ser501 is modified (phosphoserine). Residues Pro606–Glu692 form the Ras-associating domain. Thr644 carries the post-translational modification Phosphothreonine; by PLK2. In terms of domain architecture, Ras-GEF spans Ser717–Leu944. A Phosphoserine; by PLK2 modification is found at Ser806. Residue Ser930 is modified to Phosphoserine. A phosphoserine; by PLK2 mark is found at Ser933 and Ser1022. The disordered stretch occupies residues Pro1002–Gln1051. Residues Pro1030–Ala1041 are compositionally biased toward low complexity. A phosphoserine mark is found at Ser1079, Ser1088, Ser1094, Ser1115, Ser1119, and Ser1158. Positions Gly1093 to Phe1159 are disordered. Low complexity-rich tracts occupy residues Ser1110–Pro1124 and Ser1140–Phe1159. Ser1175 is modified (phosphoserine; by PLK2). 3 disordered regions span residues Ser1224–His1256, Ser1303–Lys1369, and Arg1390–Val1496. Residues Glu1227–Ser1237 show a composition bias toward basic and acidic residues. Polar residues-rich tracts occupy residues Gly1246–His1256 and Tyr1306–Gly1330. Positions Pro1440 to Ala1455 are enriched in low complexity. Residues Ala1485 to Val1496 show a composition bias toward acidic residues.

The protein belongs to the RAPGEF2 family. As to quaternary structure, found in a complex, at least composed of KIDINS220, MAGI2, NTRK1 and RAPGEF2; the complex is mainly formed at late endosomes in a neuronal growth factor (NGF)-dependent manner. Interacts (via C-terminal domain) with NEDD4 (via WW domains); this interaction leads to ubiquitination and degradation via the proteasome pathway in a cAMP-independent manner. Interacts with MAGI1 (via PDZ domain). Interacts with ADRB1 (via C-terminal PDZ motif); the interaction is direct. Interacts (via Ras-associating domain) with RAP1A (via GTP-bound active form). Interacts weakly with HRAS (via GDP- and GTP-bound forms). Interacts (via C-terminal domain) with MAGI2 (via PDZ and WW domains). Interacts with CDH1, CTNNB1 and TJP1. Ubiquitinated by NEDD4, leading to proteasomal degradation. In terms of processing, phosphorylation by PLK2 promotes its activity. Expressed in all layers of the cerebral cortex, hippocampus and cerebellum. Expressed in the cortical plate, cingulate cortex and the subventricular zone. Expressed in neurons and endocrine cells (at protein level). Expressed in melanoma cells.

It localises to the cytoplasm. The protein resides in the perinuclear region. The protein localises to the cell membrane. Its subcellular location is the late endosome. It is found in the cell junction. In terms of biological role, functions as a guanine nucleotide exchange factor (GEF), which activates Rap and Ras family of small GTPases by exchanging bound GDP for free GTP in a cAMP-dependent manner. Serves as a link between cell surface receptors and Rap/Ras GTPases in intracellular signaling cascades. Also acts as an effector for Rap1 by direct association with Rap1-GTP thereby leading to the amplification of Rap1-mediated signaling. Shows weak activity on HRAS. It is controversial whether RAPGEF2 binds cAMP and cGMP or not. Its binding to ligand-activated beta-1 adrenergic receptor ADRB1 leads to the Ras activation through the G(s)-alpha signaling pathway. Involved in the cAMP-induced Ras and Erk1/2 signaling pathway that leads to sustained inhibition of long term melanogenesis by reducing dendrite extension and melanin synthesis. Also provides inhibitory signals for cell proliferation of melanoma cells and promotes their apoptosis in a cAMP-independent nanner. Regulates cAMP-induced neuritogenesis by mediating the Rap1/B-Raf/ERK signaling through a pathway that is independent on both PKA and RAPGEF3/RAPGEF4. Involved in neuron migration and in the formation of the major forebrain fiber connections forming the corpus callosum, the anterior commissure and the hippocampal commissure during brain development. Involved in neuronal growth factor (NGF)-induced sustained activation of Rap1 at late endosomes and in brain-derived neurotrophic factor (BDNF)-induced axon outgrowth of hippocampal neurons. Plays a role in the regulation of embryonic blood vessel formation and in the establishment of basal junction integrity and endothelial barrier function. May be involved in the regulation of the vascular endothelial growth factor receptor KDR and cadherin CDH5 expression at allantois endothelial cell-cell junctions. In Mus musculus (Mouse), this protein is Rap guanine nucleotide exchange factor 2 (Rapgef2).